We begin with the raw amino-acid sequence, 371 residues long: Beta-1,3-galactosyltransferase 4 (371 aa).

Over 1–4 (MPLS) the chain is Cytoplasmic. Residues 5–25 (LFRRVLLAVLLLVIIWTLFGP) form a helical; Signal-anchor for type II membrane protein membrane-spanning segment. The Lumenal portion of the chain corresponds to 26–371 (SGLGEELLSL…RCRFIAWFSS (346 aa)). Asparagine 143 carries an N-linked (GlcNAc...) asparagine glycan.

Belongs to the glycosyltransferase 31 family. Expressed in heart, brain, spleen, kidney, lung and testis.

It localises to the golgi apparatus membrane. It carries out the reaction a ganglioside GM2 (d18:1(4E)) + UDP-alpha-D-galactose = a ganglioside GM1 (d18:1(4E)) + UDP + H(+). The enzyme catalyses a ganglioside GM2 + UDP-alpha-D-galactose = a ganglioside GM1 + UDP + H(+). It catalyses the reaction a ganglioside GD2 (d18:1(4E)) + UDP-alpha-D-galactose = a ganglioside GD1b (d18:1(4E)) + UDP + H(+). The catalysed reaction is a ganglioside GA2 (d18:1(4E)) + UDP-alpha-D-galactose = a ganglioside GA1 (d18:1(4E)) + UDP + H(+). It participates in protein modification; protein glycosylation. Involved in GM1/GD1B/GA1 ganglioside biosynthesis. This Mus musculus (Mouse) protein is Beta-1,3-galactosyltransferase 4.